Here is a 99-residue protein sequence, read N- to C-terminus: Integration host factor subunit alpha (99 aa).

Positions 51-71 are disordered; that stretch reads NFDLRDKNQRPGRNPKTGEDI.

It belongs to the bacterial histone-like protein family. As to quaternary structure, heterodimer of an alpha and a beta chain.

Its function is as follows. This protein is one of the two subunits of integration host factor, a specific DNA-binding protein that functions in genetic recombination as well as in transcriptional and translational control. This is Integration host factor subunit alpha (ihfA) from Dickeya dadantii (strain 3937) (Erwinia chrysanthemi (strain 3937)).